The primary structure comprises 885 residues: Cytosolic carboxypeptidase-like protein 5 (885 aa).

The Peptidase M14 domain maps to 150-576 (YPFSYAECQD…AVAVAALDMA (427 aa)). The Zn(2+) site is built by H247 and E250. 2 disordered regions span residues 341-364 (SGSALKTSNQSNTSPPVATPTERE) and 392-428 (ESWEKSGVQREAEHSDENESAQSRGETNSAPSEQVPP). The segment covering 344–356 (ALKTSNQSNTSPP) has biased composition (polar residues). A compositionally biased stretch (basic and acidic residues) spans 393–408 (SWEKSGVQREAEHSDE). The span at 411 to 428 (SAQSRGETNSAPSEQVPP) shows a compositional bias: polar residues. A Zn(2+)-binding site is contributed by H440. The active-site Proton donor/acceptor is the E522. Residues 606 to 668 (STGLTSNNRR…KSSPSFTFGT (63 aa)) show a composition bias toward polar residues. Disordered regions lie at residues 606-788 (STGL…RTAL) and 866-885 (ALLKNSSRQTDQHIHRSLPT). The segment covering 682-691 (RECKAQEKRR) has biased composition (basic and acidic residues). The segment covering 712-749 (LSAPVRAPLSPSSSSSSSSSSPSSSSSAPGPGSISLAG) has biased composition (low complexity).

It belongs to the peptidase M14 family. Zn(2+) serves as cofactor.

It localises to the cytoplasm. The protein resides in the cytosol. The protein localises to the nucleus. It is found in the cytoskeleton. Its subcellular location is the spindle. It localises to the midbody. It catalyses the reaction gamma-L-glutamyl-L-glutamyl-[protein] + H2O = L-glutamyl-[protein] + L-glutamate. The enzyme catalyses (L-glutamyl)(n+1)-gamma-L-glutamyl-L-glutamyl-[protein] + H2O = (L-glutamyl)(n)-gamma-L-glutamyl-L-glutamyl-[protein] + L-glutamate. The catalysed reaction is C-terminal L-alpha-aminoacyl-L-glutamyl-[tubulin] + H2O = C-terminal L-alpha-aminoacyl-[tubulin] + L-glutamate. It carries out the reaction C-terminal L-alpha-aminoacyl-L-glutamyl-L-glutamyl-[tubulin] + H2O = C-terminal L-alpha-aminoacyl-L-glutamyl-[tubulin] + L-glutamate. In terms of biological role, metallocarboxypeptidase that mediates deglutamylation of tubulin and non-tubulin target proteins. Catalyzes the removal of polyglutamate side chains present on the gamma-carboxyl group of glutamate residues within the C-terminal tail of alpha- and beta-tubulin. Cleaves alpha- and gamma-linked polyglutamate tubulin side-chain, as well as the branching point glutamate. Also catalyzes the removal of alpha-linked glutamate residues from the carboxy-terminus of alpha-tubulin. The sequence is that of Cytosolic carboxypeptidase-like protein 5 (agbl5) from Danio rerio (Zebrafish).